The following is a 137-amino-acid chain: Phospholipase A2 group V (137 aa).

The signal sequence occupies residues 1–20 (MKRLLTLAWFLACSVPAVPG). Cystine bridges form between Cys46–Cys137, Cys48–Cys64, Cys63–Cys117, Cys70–Cys110, Cys79–Cys103, and Cys97–Cys108. The Ca(2+) site is built by Tyr47, Gly49, and Gly51. The active site involves His67. Asp68 contributes to the Ca(2+) binding site. Asp111 is an active-site residue.

The protein belongs to the phospholipase A2 family. The cofactor is Ca(2+). Post-translationally, this enzyme lacks one of the seven disulfide bonds found in similar PA2 proteins.

It localises to the secreted. The protein resides in the cell membrane. The protein localises to the cytoplasmic vesicle. It is found in the phagosome. Its subcellular location is the recycling endosome. It localises to the golgi apparatus. The protein resides in the cis-Golgi network. The protein localises to the trans-Golgi network. It carries out the reaction a 1,2-diacyl-sn-glycero-3-phosphocholine + H2O = a 1-acyl-sn-glycero-3-phosphocholine + a fatty acid + H(+). The catalysed reaction is 1-hexadecanoyl-2-(9Z-octadecenoyl)-sn-glycero-3-phosphocholine + H2O = 1-hexadecanoyl-sn-glycero-3-phosphocholine + (9Z)-octadecenoate + H(+). It catalyses the reaction 1-hexadecanoyl-2-(5Z,8Z,11Z,14Z-eicosatetraenoyl)-sn-glycero-3-phosphocholine + H2O = 1-hexadecanoyl-sn-glycero-3-phosphocholine + (5Z,8Z,11Z,14Z)-eicosatetraenoate + H(+). The enzyme catalyses 1-hexadecanoyl-2-(9Z,12Z-octadecadienoyl)-sn-glycero-3-phosphoethanolamine + H2O = 1-hexadecanoyl-sn-glycero-3-phosphoethanolamine + (9Z,12Z)-octadecadienoate + H(+). It carries out the reaction 1-hexadecanoyl-2-(5Z,8Z,11Z,14Z-eicosatetraenoyl)-sn-glycero-3-phosphoethanolamine + H2O = 1-hexadecanoyl-sn-glycero-3-phosphoethanolamine + (5Z,8Z,11Z,14Z)-eicosatetraenoate + H(+). The catalysed reaction is 1-octadecanoyl-2-(5Z,8Z,11Z,14Z-eicosatetraenoyl)-sn-glycero-3-phospho-(1D-myo-inositol) + H2O = 1-octadecanoyl-sn-glycero-3-phospho-(1D-myo-inositol) + (5Z,8Z,11Z,14Z)-eicosatetraenoate + H(+). It catalyses the reaction 1-hexadecanoyl-2-(9Z-octadecenoyl)-sn-glycero-3-phosphoglycerol + H2O = 1-hexadecanoyl-sn-glycero-3-phosphoglycerol + (9Z)-octadecenoate + H(+). The enzyme catalyses N-hexadecanoyl-1,2-di-(9Z-octadecenoyl)-sn-glycero-3-phosphoethanolamine + H2O = N-hexadecanoyl-1-(9Z-octadecenoyl)-sn-glycero-3-phosphoethanolamine + (9Z)-octadecenoate + H(+). It carries out the reaction 1'-[1,2-di-(9Z-octadecenoyl)-sn-glycero-3-phospho]-3'-[1-(9Z-octadecenoyl)-sn-glycero-3-phospho]-glycerol + H2O = 1',3'-bis-[1-(9Z-octadecenoyl)-sn-glycero-3-phospho]-glycerol + (9Z)-octadecenoate + H(+). The catalysed reaction is 1',3'-bis[1,2-di-(9Z-octadecenoyl)-sn-glycero-3-phospho]-glycerol + H2O = 1'-[1,2-di-(9Z-octadecenoyl)-sn-glycero-3-phospho]-3'-[1-(9Z-octadecenoyl)-sn-glycero-3-phospho]-glycerol + (9Z)-octadecenoate + H(+). The protein operates within lipid metabolism; phospholipid metabolism. It functions in the pathway lipid metabolism; leukotriene B4 biosynthesis. It participates in lipid metabolism; leukotriene C4 biosynthesis. Its function is as follows. Secretory calcium-dependent phospholipase A2 that primarily targets extracellular phospholipids. Hydrolyzes the ester bond of the fatty acyl group attached at sn-2 position of phospholipids (phospholipase A2 activity), preferentially releasing fatty acyl groups with a low degree of unsaturation such as oleoyl (C18:1) and linoleoyl (C18:2) groups. Hydrolyzes low-density lipoprotein (LDL) phospholipids releasing unsaturated fatty acids that drive macrophage polarization toward an M2 phenotype. May act in an autocrine and paracrine manner. Contributes to lipid remodeling of cellular membranes at different subcellular locations and generation of lipid mediators involved in pathogen clearance. Cleaves sn-2 fatty acyl chains of cardiolipin, a major component of the inner membrane of mitochondria and bacterial membranes. Promotes phagocytosis of bacteria in macrophages through production of lysophosphatidylethanolamines. Displays bactericidal activity against Gram-positive bacteria by directly hydrolyzing phospholipids of the bacterial membrane. Promotes phagocytosis and killing of ingested fungi likely through controlling phagosome-lysosome fusion and phagosome maturation. Plays a role in biosynthesis of cysteinyl leukotrienes (CysLTs) in myeloid cells. In eosinophils, triggers perinuclear arachidonate release and LTC4 synthesis in a PLA2G4A-independent way. In neutrophils, amplifies CysLTs biosynthesis initiated by PLA2G4A. Promotes immune complex clearance in macrophages via stimulating synthesis of CysLTs, which act through CYSLTR1 to trigger phagocytosis. May regulate antigen processing in antigen-presenting cells. In pulmonary macrophages regulates IL33 production required for activation of group 2 innate lymphoid cells. May play a role in the biosynthesis of N-acyl ethanolamines that regulate energy metabolism. Hydrolyzes N-acyl phosphatidylethanolamines to N-acyl lysophosphatidylethanolamines, which are further cleaved by a lysophospholipase D to release N-acyl ethanolamines. The sequence is that of Phospholipase A2 group V (Pla2g5) from Rattus norvegicus (Rat).